The sequence spans 688 residues: Translation initiation factor IF-2 (688 aa).

Basic and acidic residues-rich tracts occupy residues G53–E62 and K86–N95. The segment at G53 to E100 is disordered. In terms of domain architecture, tr-type G spans K187–E354. Residues G196–T203 are G1. G196–T203 is a GTP binding site. The segment at G221–H225 is G2. The segment at D242–G245 is G3. Residues D242 to H246 and N296 to D299 each bind GTP. Residues N296–D299 are G4. The segment at S332 to H334 is G5.

This sequence belongs to the TRAFAC class translation factor GTPase superfamily. Classic translation factor GTPase family. IF-2 subfamily.

The protein localises to the cytoplasm. In terms of biological role, one of the essential components for the initiation of protein synthesis. Protects formylmethionyl-tRNA from spontaneous hydrolysis and promotes its binding to the 30S ribosomal subunits. Also involved in the hydrolysis of GTP during the formation of the 70S ribosomal complex. The chain is Translation initiation factor IF-2 from Clostridium botulinum (strain Loch Maree / Type A3).